Here is a 250-residue protein sequence, read N- to C-terminus: UPF0736 protein RBAM_011410 (250 aa).

This sequence belongs to the UPF0736 family.

The protein is UPF0736 protein RBAM_011410 of Bacillus velezensis (strain DSM 23117 / BGSC 10A6 / LMG 26770 / FZB42) (Bacillus amyloliquefaciens subsp. plantarum).